We begin with the raw amino-acid sequence, 166 residues long: Eukaryotic translation initiation factor 5A (166 aa).

Position 52 is a hypusine (lysine 52). The tract at residues 99–125 (DREDPSKPAHLSLMDDEGETRDNLDMP) is disordered.

Belongs to the eIF-5A family. Post-translationally, lys-52 undergoes hypusination, a unique post-translational modification that consists in the addition of a butylamino group from spermidine to lysine side chain, leading to the formation of the unusual amino acid hypusine. eIF-5As are the only known proteins to undergo this modification, which is essential for their function. Hypusination is mediated by the consecutive action of deoxyhypusine synthase DHSc and deoxyhypusine hydroxylase DOHH.

Its subcellular location is the cytoplasm. Functionally, translation factor that promotes translation elongation and termination, particularly upon ribosome stalling at specific amino acid sequence contexts. Binds between the exit (E) and peptidyl (P) site of the ribosome and promotes rescue of stalled ribosome: specifically required for efficient translation of polyproline-containing peptides as well as other motifs that stall the ribosome. Acts as a ribosome quality control (RQC) cofactor by joining the RQC complex to facilitate peptidyl transfer during CAT tailing step. Required for cell growth during both bloodstream (BF) and insect procyclic (PF) life cycle stages and for survival of the bloodstream form. In Trypanosoma brucei brucei (strain 927/4 GUTat10.1), this protein is Eukaryotic translation initiation factor 5A.